A 203-amino-acid chain; its full sequence is Protein-L-isoaspartate O-methyltransferase (203 aa).

The active site involves Ser50.

Belongs to the methyltransferase superfamily. L-isoaspartyl/D-aspartyl protein methyltransferase family.

It is found in the cytoplasm. It carries out the reaction [protein]-L-isoaspartate + S-adenosyl-L-methionine = [protein]-L-isoaspartate alpha-methyl ester + S-adenosyl-L-homocysteine. In terms of biological role, catalyzes the methyl esterification of L-isoaspartyl residues in peptides and proteins that result from spontaneous decomposition of normal L-aspartyl and L-asparaginyl residues. It plays a role in the repair and/or degradation of damaged proteins. This Methanococcoides burtonii (strain DSM 6242 / NBRC 107633 / OCM 468 / ACE-M) protein is Protein-L-isoaspartate O-methyltransferase.